Reading from the N-terminus, the 548-residue chain is MDHFNLAGPESNTSITSLEWLGIKNSFTGSHWAHITGLSELHPTGFLCLIATLIIGIVHLTRGPKPTVLPVVNPPGTFELTANRVKKEWLVDARQIIRRGFEKFPGKPFNMIAADVGLTTVLPPEYASEIRNNPSLSFVAFMAHLFFSELPGFEPTREGMFDNDIGITVVHKYLTVNLARITEPLSREATAALKDIFTDNSEWHDANLKAINLALVARLSSRIFLGEELCRNEEWLKITVNYTVDVMKAAERLRRVPGPLRRIVHWFLPEAQKCRDEVKRAGKVIRPVLEKRRREKATMESEGKEALQYNDAIEWFEQMAKSQGTSYDPEVVQLFLSTVAIHTTSDLLTVVMADLARNPEIIEPLREEISSVLRDGGWKKTSLTDMKLLDSVLKESLRLKPIAVVSMRRVAMDHLKLSDGTFLPKGTKMAVSSHRMWDPDVYENPEQWDGFRYVNLRETPGQDKHAQFVSTSERHLGFGHGKHACPGRFFASSELKVALCHILMKYDFELAPGTVVQHRYSGASYYADPAIRVMLRRRNVALPSWFER.

C485 provides a ligand contact to heme.

Belongs to the cytochrome P450 family. Requires heme as cofactor.

Its pathway is secondary metabolite biosynthesis. Its function is as follows. Cytochrome P450 monooxygenase; part of the gene cluster that mediates the biosynthesis of heptelidic acid (HA), a sesquiterpene lactone that acts as an inhibitor of glyceraldehyde-3-phosphatedehydrogenase (GAPDH) and a growth inhibitor of the salt-tolerant lactic acid bacteria in soy sauce brewing. The polypeptide is Cytochrome P450 monooxygenase hepE (Aspergillus oryzae (strain ATCC 42149 / RIB 40) (Yellow koji mold)).